A 1298-amino-acid polypeptide reads, in one-letter code: Ras guanine nucleotide exchange factor Q (1298 aa).

5 disordered regions span residues 1-26 (MDIN…INNF), 46-88 (NNNI…SIEG), 211-271 (NISN…GPLK), 314-384 (YTPP…QQQQ), and 459-533 (LSNG…STTT). 2 stretches are compositionally biased toward low complexity: residues 211–245 (NISN…NSNN) and 315–384 (TPPS…QQQQ). The stretch at 352-389 (SSLNANNNTNNNNQQLQQQQQQQQQQQLQQQQQLTKSY) forms a coiled coil. Positions 473-482 (LHLSTESTTS) are enriched in polar residues. Low complexity-rich tracts occupy residues 483–501 (NNNN…NNNN) and 508–533 (TTNS…STTT). Residues 550–689 (DKDEVIAGER…YLKKAINDSG (140 aa)) enclose the N-terminal Ras-GEF domain. Residues 723-801 (MSQSLQLKER…SSSSTTTTTT (79 aa)) form the DEP domain. 2 disordered regions span residues 781 to 864 (SKSG…PNSI) and 884 to 920 (GIAN…SNSF). Positions 783–864 (SGSSFSPSSS…ITSTSLPNSI (82 aa)) are enriched in low complexity. In terms of domain architecture, Ras-GEF spans 964-1193 (HPVEIARQLT…YKASHMIEQP (230 aa)). A disordered region spans residues 1214-1267 (TTTTTNNLNNNNNNNNPNNNNNNNNNSANNKSSPSPSPSSSPITSSPISSLTIN).

Its function is as follows. Promotes the exchange of Ras-bound GDP by GTP. Seems to play a role in chemotaxis. In Dictyostelium discoideum (Social amoeba), this protein is Ras guanine nucleotide exchange factor Q (gefQ).